The following is a 419-amino-acid chain: Transcription factor 7 (419 aa).

A compositionally biased stretch (gly residues) spans 1-12 (MPQLDSGGGGAG). The tract at residues 1–60 (MPQLDSGGGGAGRGDDLGAPDELLAFQDEGEEQDDKNRDSPVGPERDLAELKSSLVNESE) is CTNNB1-binding. 2 disordered regions span residues 1 to 111 (MPQL…LKAP) and 134 to 200 (PASG…SGFY). Composition is skewed to basic and acidic residues over residues 35 to 50 (DKNR…DLAE) and 86 to 109 (LGRE…DGLK). Positions 143-158 (QPQPPLHNKPGQPPHG) are enriched in pro residues. Positions 304 to 372 (IKKPLNAFML…LHMQLYPGWS (69 aa)) form a DNA-binding region, HMG box. Residues 374–406 (RDNYGKKKRRSREKHQESTTGGKRNAFGTYPEK) are disordered. Residues 379-385 (KKKRRSR) carry the Nuclear localization signal motif.

This sequence belongs to the TCF/LEF family. Binds the armadillo repeat of CTNNB1 and forms a stable complex. Binds TLE5, TLE1, TLE2, TLE3 and TLE4. Interacts with MLLT11. Interacts with DAZAP2. In terms of assembly, interacts (via N-terminus) with SOX13; inhibits WNT-mediated transcriptional activity. As to expression, T-cell specific. Expressed in triple negative 2 subpopulations of T-cells and both the gamma-delta and alpha-beta T-cell lineages. Expressed in Il7 receptor positive innate-like T-cells in the mesenteric lymph nodes and spleen (at protein level).

Its subcellular location is the nucleus. In terms of biological role, transcriptional activator involved in T-cell lymphocyte differentiation. Necessary for the survival of CD4(+) CD8(+) immature thymocytes. Isoforms lacking the N-terminal CTNNB1 binding domain cannot fulfill this role. Binds to the T-lymphocyte-specific enhancer element (5'-WWCAAAG-3') found in the promoter of the CD3E gene. Represses expression of the T-cell receptor gamma gene in alpha-beta T-cell lineages. Inhibits the developmental program of IL17A effector gamma-delta T-cell subsets via regulating the transcription of T-cell lineage effector proteins. Required for the development of natural killer receptor-positive lymphoid tissue inducer T-cells. TLE1, TLE2, TLE3 and TLE4 repress transactivation mediated by TCF7 and CTNNB1. May also act as feedback transcriptional repressor of CTNNB1 and TCF7L2 target genes. This chain is Transcription factor 7, found in Mus musculus (Mouse).